The primary structure comprises 383 residues: Guanine nucleotide-binding protein alpha-1 subunit (383 aa).

Residues 1-20 (MGLLCSRSRHHTEDTDENTQ) are disordered. A lipid anchor (N-myristoyl glycine) is attached at glycine 2. Cysteine 5 carries the S-palmitoyl cysteine lipid modification. The region spanning 37 to 383 (HIRKLLLLGA…RRNLLEAGLL (347 aa)) is the G-alpha domain. The interval 40–53 (KLLLLGAGESGKST) is G1 motif. Positions 48, 49, 50, 51, 52, 53, 162, 187, 188, 193, 221, 287, 288, 290, and 355 each coordinate GTP. Residue serine 52 participates in Mg(2+) binding. A G2 motif region spans residues 185–193 (DVLYARVRT). Residue threonine 193 participates in Mg(2+) binding. A G3 motif region spans residues 214-223 (YRLFDVGGQR). Residues 283–290 (MLFLNKFD) are G4 motif. The tract at residues 353–358 (TTALDQ) is G5 motif.

It belongs to the G-alpha family. As to quaternary structure, g proteins are composed of 3 units; alpha, beta and gamma. The alpha chain contains the guanine nucleotide binding site. Interacts with RGS1, THF1, the pirin protein PRN1, GTG1 and GTG2. Binds to GCR1. May interact with ADT3. No interactions with RACK1A, RACK1B or RACK1C. Interacts with PLDALPHA1. Interacts with CAND2/PMTR1. The cofactor is Mg(2+). In terms of tissue distribution, more abundant in roots and/or leaves.

It localises to the cell membrane. In terms of biological role, exhibits a fast rate of basal nucleotide exchange. Guanine nucleotide-binding proteins (G proteins) are involved as modulators or transducers in various transmembrane signaling systems. Together with GCR1, may regulate the cell cycle via a signaling cascade that uses phosphatidylinositol-specific phospholipase C (PI-PLC) as an effector and inositol 1,4,5-trisphosphate (IP(3)) as a second messenger. Promotes abscisic acid (ABA) responses in guard cells. Involved in the blue light (BL) signaling. Together with GCR1 and ADT3, required for BL-mediated synthesis of phenylpyruvate and subsequently of phenylalanine (Phe), in etiolated seedlings. Modulates root architecture (e.g. lateral root formation). Negatively regulated by RGS1. In collaboration with CAND2/PMTR1, regulates the melatonin-mediated stomatal closure involving H(2)O(2) and Ca(2+) signals. The polypeptide is Guanine nucleotide-binding protein alpha-1 subunit (Arabidopsis thaliana (Mouse-ear cress)).